The chain runs to 114 residues: Holo-[acyl-carrier-protein] synthase (114 aa).

Residues aspartate 8 and glutamate 58 each coordinate Mg(2+).

It belongs to the P-Pant transferase superfamily. AcpS family. The cofactor is Mg(2+).

It localises to the cytoplasm. The catalysed reaction is apo-[ACP] + CoA = holo-[ACP] + adenosine 3',5'-bisphosphate + H(+). Its function is as follows. Transfers the 4'-phosphopantetheine moiety from coenzyme A to a Ser of acyl-carrier-protein. The sequence is that of Holo-[acyl-carrier-protein] synthase from Mycoplasma genitalium (strain ATCC 33530 / DSM 19775 / NCTC 10195 / G37) (Mycoplasmoides genitalium).